Here is a 345-residue protein sequence, read N- to C-terminus: Phosphoribosylformylglycinamidine cyclo-ligase (345 aa).

The protein belongs to the AIR synthase family.

The protein resides in the cytoplasm. The catalysed reaction is 2-formamido-N(1)-(5-O-phospho-beta-D-ribosyl)acetamidine + ATP = 5-amino-1-(5-phospho-beta-D-ribosyl)imidazole + ADP + phosphate + H(+). It functions in the pathway purine metabolism; IMP biosynthesis via de novo pathway; 5-amino-1-(5-phospho-D-ribosyl)imidazole from N(2)-formyl-N(1)-(5-phospho-D-ribosyl)glycinamide: step 2/2. The sequence is that of Phosphoribosylformylglycinamidine cyclo-ligase from Shewanella baltica (strain OS185).